The chain runs to 255 residues: Phosphate import ATP-binding protein PstB (255 aa).

The 241-residue stretch at 10 to 250 folds into the ABC transporter domain; that stretch reads INIKDLNLWY…PQMKSTEDYI (241 aa). 42 to 49 contacts ATP; it reads GPSGCGKS.

It belongs to the ABC transporter superfamily. Phosphate importer (TC 3.A.1.7) family. The complex is composed of two ATP-binding proteins (PstB), two transmembrane proteins (PstC and PstA) and a solute-binding protein (PstS).

It is found in the cell membrane. The catalysed reaction is phosphate(out) + ATP + H2O = ADP + 2 phosphate(in) + H(+). Part of the ABC transporter complex PstSACB involved in phosphate import. Responsible for energy coupling to the transport system. This chain is Phosphate import ATP-binding protein PstB, found in Methanococcoides burtonii (strain DSM 6242 / NBRC 107633 / OCM 468 / ACE-M).